The following is a 351-amino-acid chain: Glycerol-3-phosphate dehydrogenase 1-like protein (351 aa).

11–16 (GSGNWG) provides a ligand contact to NAD(+). K121 contributes to the substrate binding site. A154 lines the NAD(+) pocket. The active-site Proton acceptor is K205. NAD(+) contacts are provided by R271, K298, and Q300. 271–272 (RN) serves as a coordination point for substrate.

Belongs to the NAD-dependent glycerol-3-phosphate dehydrogenase family.

It is found in the cytoplasm. It carries out the reaction sn-glycerol 3-phosphate + NAD(+) = dihydroxyacetone phosphate + NADH + H(+). Its function is as follows. Plays a role in regulating cardiac sodium current. This is Glycerol-3-phosphate dehydrogenase 1-like protein (gpd1l) from Danio rerio (Zebrafish).